The chain runs to 379 residues: Putative thylakoid lumen peptidyl-prolyl cis-trans isomerase sll0408 (379 aa).

The signal sequence occupies residues 1-33; sequence MQIIKTPLGIITRRGLQLSLLSLLLTMLSLTWA. Positions 190-378 constitute a PPIase cyclophilin-type domain; the sequence is GRATVEMTTN…SGADNLVNGN (189 aa).

It localises to the cellular thylakoid lumen. It catalyses the reaction [protein]-peptidylproline (omega=180) = [protein]-peptidylproline (omega=0). In terms of biological role, PPIases accelerate the folding of proteins. It catalyzes the cis-trans isomerization of proline imidic peptide bonds in oligopeptides. Required for the assembly and stabilization of PSII. The chain is Putative thylakoid lumen peptidyl-prolyl cis-trans isomerase sll0408 from Synechocystis sp. (strain ATCC 27184 / PCC 6803 / Kazusa).